The chain runs to 213 residues: Inactive ribonuclease-like protein 10 (213 aa).

The N-terminal stretch at 1 to 24 is a signal peptide; the sequence is MKLTLVQFFFMMLLLLLGLGVGLG. A glycan (N-linked (GlcNAc...) asparagine) is linked at Asn128.

The protein belongs to the pancreatic ribonuclease family. In terms of processing, the N-terminus is blocked. Glycosylated. In terms of tissue distribution, male-specific expression in proximal caput of the epididymis.

It localises to the secreted. Its function is as follows. Secreted proximal epididymal protein required for post-testicular sperm maturation and male fertility. May be involved in sperm adhesion to the egg zona pellucida. Does not have ribonuclease activity. This Sus scrofa (Pig) protein is Inactive ribonuclease-like protein 10 (RNASE10).